The chain runs to 934 residues: Complement component C6 (934 aa).

The first 21 residues, 1 to 21 (MTRHLTLCFILLVMLIDKSEA), serve as a signal peptide directing secretion. 11 disulfide bridges follow: Cys-22-Cys-61, Cys-24-Cys-65, Cys-35-Cys-73, Cys-39-Cys-78, Cys-82-Cys-117, Cys-93-Cys-127, Cys-96-Cys-133, Cys-140-Cys-151, Cys-146-Cys-164, Cys-158-Cys-173, and Cys-180-Cys-218. TSP type-1 domains are found at residues 22 to 79 (CFCD…QTCP) and 81 to 134 (NCVL…KLCK). An LDL-receptor class A domain is found at 138-175 (TNCKNKFLCDSGRCIPSKLECNGENDCGDNSDERNCGR). Residues Leu-156, Asn-159, Glu-161, Asp-163, Asp-169, and Glu-170 each contribute to the Ca(2+) site. Residues 176 to 522 (TKPVCTRIYT…EYAAKFDPCQ (347 aa)) enclose the MACPF domain. Residues 278–290 (FFPIPIFHFSEKN) form a beta stranded membrane-spanning segment. An N-linked (GlcNAc...) asparagine glycan is attached at Asn-324. 16 disulfide bridges follow: Cys-399–Cys-420, Cys-499–Cys-623, Cys-521–Cys-570, Cys-523–Cys-539, Cys-526–Cys-541, Cys-543–Cys-552, Cys-577–Cys-611, Cys-589–Cys-601, Cys-644–Cys-686, Cys-672–Cys-699, Cys-704–Cys-746, Cys-732–Cys-761, Cys-773–Cys-823, Cys-784–Cys-801, Cys-786–Cys-837, and Cys-793–Cys-816. The beta stranded transmembrane segment at 402–415 (YETKKLKFLYMEIH) threads the bilayer. In terms of domain architecture, EGF-like spans 523-553 (CAPCPNNGRPRLSGTECLCVCQSGTYGENCE). The TSP type-1 3 domain maps to 565 to 612 (DGNWGCWSSWSACNAAYRRSRTRECNNPAPQRGGQSCGGKDQQEEDCT). CCP stretches follow at residues 611–688 (CTVS…RCLP) and 689–765 (DRTW…EQAI). Sushi domains are found at residues 642–701 (SGCS…ECQR) and 702–763 (TSCL…TCEQ). Residues 642-934 (SGCSQPPLPE…EILNPGRCPD (293 aa)) are C5b-binding domain. Residues 766–840 (LTKSKDLCPP…FVHSGSCQEG (75 aa)) form a factor I module (FIM) 1 region. The 55-residue stretch at 785–839 (ICMSPEEDCSAYSEDLCIFDGGSSQYFTSSACKFLAGKCLNNTQSHFVHSGSCQE) folds into the Kazal-like 1 domain. N-linked (GlcNAc...) asparagine glycosylation is found at Asn-825, Asn-855, and Asn-872. The tract at residues 858–934 (KRVSCGYNTC…EILNPGRCPD (77 aa)) is factor I module (FIM) 2. Cystine bridges form between Cys-862–Cys-873, Cys-867–Cys-919, Cys-880–Cys-897, Cys-882–Cys-932, and Cys-888–Cys-912. The Kazal-like 2 domain occupies 876 to 934 (HTSNCVCLLPPQCSKDENQLYCVKIGSSMREKTVNICTLGAVRCANIKVEILNPGRCPD).

This sequence belongs to the complement C6/C7/C8/C9 family. Component of the membrane attack complex (MAC), composed of complement C5b, C6, C7, C8A, C8B, C8G and multiple copies of the pore-forming subunit C9. All cysteine residues are assumed to be cross-linked to one another. Individual modules containing an even number of conserved cysteine residues are supposed to have disulfide linkages only within the same module.

Its subcellular location is the secreted. The protein resides in the target cell membrane. With respect to regulation, membrane attack complex (MAC) assembly is inhibited by CD59, thereby protecting self-cells from damage during complement activation. MAC assembly is also inhibited by clusterin (CLU) chaperones that inhibit polymerization of C9. Component of the membrane attack complex (MAC), a multiprotein complex activated by the complement cascade, which inserts into a target cell membrane and forms a pore, leading to target cell membrane rupture and cell lysis. The MAC is initiated by proteolytic cleavage of C5 into complement C5b in response to the classical, alternative, lectin and GZMK complement pathways. The complement pathways consist in a cascade of proteins that leads to phagocytosis and breakdown of pathogens and signaling that strengthens the adaptive immune system. Together with component C5b, involved in MAC complex assembly: complement C5b and C6 associate with the outer leaflet of target cell membrane, reducing the energy for membrane bending. The protein is Complement component C6 of Mus musculus (Mouse).